Here is a 248-residue protein sequence, read N- to C-terminus: 3-deoxy-manno-octulosonate cytidylyltransferase (248 aa).

This sequence belongs to the KdsB family.

The protein resides in the cytoplasm. It carries out the reaction 3-deoxy-alpha-D-manno-oct-2-ulosonate + CTP = CMP-3-deoxy-beta-D-manno-octulosonate + diphosphate. The protein operates within nucleotide-sugar biosynthesis; CMP-3-deoxy-D-manno-octulosonate biosynthesis; CMP-3-deoxy-D-manno-octulosonate from 3-deoxy-D-manno-octulosonate and CTP: step 1/1. It functions in the pathway bacterial outer membrane biogenesis; lipopolysaccharide biosynthesis. Functionally, activates KDO (a required 8-carbon sugar) for incorporation into bacterial lipopolysaccharide in Gram-negative bacteria. The chain is 3-deoxy-manno-octulosonate cytidylyltransferase from Salmonella agona (strain SL483).